The chain runs to 485 residues: Proline--tRNA ligase (485 aa).

The protein belongs to the class-II aminoacyl-tRNA synthetase family. ProS type 3 subfamily. As to quaternary structure, homodimer.

Its subcellular location is the cytoplasm. It catalyses the reaction tRNA(Pro) + L-proline + ATP = L-prolyl-tRNA(Pro) + AMP + diphosphate. In terms of biological role, catalyzes the attachment of proline to tRNA(Pro) in a two-step reaction: proline is first activated by ATP to form Pro-AMP and then transferred to the acceptor end of tRNA(Pro). This chain is Proline--tRNA ligase, found in Methanopyrus kandleri (strain AV19 / DSM 6324 / JCM 9639 / NBRC 100938).